Reading from the N-terminus, the 375-residue chain is Alcohol dehydrogenase 1A (375 aa).

Position 1 is an N-acetylglycine (Gly1). Zn(2+)-binding residues include Cys46, His67, Cys97, Cys100, Cys103, Cys111, and Cys174. Residues 199-204 (GLGGVG), Asp223, Lys228, 293-295 (VGL), and Arg370 contribute to the NAD(+) site.

The protein belongs to the zinc-containing alcohol dehydrogenase family. Class-I subfamily. Multimeric (with different ratios of monomers). Zn(2+) serves as cofactor.

The protein resides in the cytoplasm. The catalysed reaction is a primary alcohol + NAD(+) = an aldehyde + NADH + H(+). It catalyses the reaction a secondary alcohol + NAD(+) = a ketone + NADH + H(+). The protein is Alcohol dehydrogenase 1A of Saara hardwickii (Indian spiny-tailed lizard).